A 137-amino-acid polypeptide reads, in one-letter code: Golgin subfamily A member 7 (137 aa).

2 S-palmitoyl cysteine lipidation sites follow: C69 and C72.

This sequence belongs to the ERF4 family. In terms of assembly, interacts with ZDHHC9.

It is found in the golgi apparatus membrane. In terms of biological role, may be involved in protein transport from Golgi to cell surface. The ZDHHC9-GOLGA7 complex is a palmitoyltransferase specific for HRAS and NRAS. The protein is Golgin subfamily A member 7 (GOLGA7) of Gallus gallus (Chicken).